Reading from the N-terminus, the 707-residue chain is Ornithine decarboxylase (707 aa).

Positions 83 to 102 are disordered; it reads NRNPLSRADSAAGREETAQT. Residue K288 is modified to N6-(pyridoxal phosphate)lysine. Pyridoxal 5'-phosphate is bound by residues S421, G458, and 498–501; that span reads EPGR. Position 561-562 (561-562) interacts with substrate; the sequence is FD. C634 serves as the catalytic Proton donor; shared with dimeric partner. D635 lines the substrate pocket. Y663 provides a ligand contact to pyridoxal 5'-phosphate.

This sequence belongs to the Orn/Lys/Arg decarboxylase class-II family. As to quaternary structure, homodimer. Only the dimer is catalytically active, as the active sites are constructed of residues from both monomers. Pyridoxal 5'-phosphate serves as cofactor.

It catalyses the reaction L-ornithine + H(+) = putrescine + CO2. It functions in the pathway amine and polyamine biosynthesis; putrescine biosynthesis via L-ornithine pathway; putrescine from L-ornithine: step 1/1. Inhibited by antizyme (AZ) in response to polyamine levels. AZ inhibits the assembly of the functional homodimer by binding to ODC monomers and targeting them for ubiquitin-independent proteolytic destruction by the 26S proteasome. Inhibited by 1-amino-oxy-3-aminopropane (APA, an isosteric analog of putrescine). Irreversibly inhibited by alpha-difluoromethylornithine (DFMO, a curative agent of West African sleeping sickness). Functionally, catalyzes the first and rate-limiting step of polyamine biosynthesis that converts ornithine into putrescine, which is the precursor for the polyamines, spermidine and spermine. Polyamines are essential for cell proliferation and are implicated in cellular processes, ranging from DNA replication to apoptosis. This Leishmania donovani protein is Ornithine decarboxylase.